Reading from the N-terminus, the 119-residue chain is NADH-quinone oxidoreductase subunit A (119 aa).

The next 3 helical transmembrane spans lie at 7–27 (FPVL…VSIG), 63–83 (LVAI…PWGV), and 88–108 (IGWP…LGFA).

This sequence belongs to the complex I subunit 3 family. NDH-1 is composed of 14 different subunits. Subunits NuoA, H, J, K, L, M, N constitute the membrane sector of the complex.

It is found in the cell inner membrane. The enzyme catalyses a quinone + NADH + 5 H(+)(in) = a quinol + NAD(+) + 4 H(+)(out). Functionally, NDH-1 shuttles electrons from NADH, via FMN and iron-sulfur (Fe-S) centers, to quinones in the respiratory chain. The immediate electron acceptor for the enzyme in this species is believed to be ubiquinone. Couples the redox reaction to proton translocation (for every two electrons transferred, four hydrogen ions are translocated across the cytoplasmic membrane), and thus conserves the redox energy in a proton gradient. This Paraburkholderia xenovorans (strain LB400) protein is NADH-quinone oxidoreductase subunit A.